The primary structure comprises 533 residues: Glucose-6-phosphate isomerase (533 aa).

The active-site Proton donor is Glu-341. Catalysis depends on residues His-372 and Lys-501.

Belongs to the GPI family.

It is found in the cytoplasm. It catalyses the reaction alpha-D-glucose 6-phosphate = beta-D-fructose 6-phosphate. It participates in carbohydrate biosynthesis; gluconeogenesis. The protein operates within carbohydrate degradation; glycolysis; D-glyceraldehyde 3-phosphate and glycerone phosphate from D-glucose: step 2/4. In terms of biological role, catalyzes the reversible isomerization of glucose-6-phosphate to fructose-6-phosphate. This Cereibacter sphaeroides (strain ATCC 17029 / ATH 2.4.9) (Rhodobacter sphaeroides) protein is Glucose-6-phosphate isomerase.